The sequence spans 160 residues: Cytochrome c-type biogenesis protein CcmE (160 aa).

Over 1–8 (MNPRRKQR) the chain is Cytoplasmic. A helical; Signal-anchor for type II membrane protein transmembrane segment spans residues 9 to 29 (LTWVAILVIGVSVATGLMLYA). The Periplasmic segment spans residues 30–160 (LSQSIDLFYT…PNTVEKGEGQ (131 aa)). Heme is bound by residues His130 and Tyr134.

It belongs to the CcmE/CycJ family.

It localises to the cell inner membrane. Its function is as follows. Heme chaperone required for the biogenesis of c-type cytochromes. Transiently binds heme delivered by CcmC and transfers the heme to apo-cytochromes in a process facilitated by CcmF and CcmH. The sequence is that of Cytochrome c-type biogenesis protein CcmE from Idiomarina loihiensis (strain ATCC BAA-735 / DSM 15497 / L2-TR).